The primary structure comprises 481 residues: Innexin inx6 (481 aa).

Over 1 to 21 the chain is Cytoplasmic; that stretch reads MYAAVKPLSNYLRLKTVRIYD. Residues 22–42 form a helical membrane-spanning segment; it reads PIFTLHSKCTIVILLTCTFLL. Over 43 to 144 the chain is Extracellular; sequence SAKQYFGEPI…VTKRMYLRYY (102 aa). Residues 145 to 165 form a helical membrane-spanning segment; it reads QWVFMILLFQSLLFYFPSFLW. Topologically, residues 166–220 are cytoplasmic; the sequence is KVWEGQRMEQLCCEVGDALIVEATYRTRLQMLTRYFRAQFAPIHWCYSIKYAFCE. Residues 221–241 form a helical membrane-spanning segment; it reads LLNVFISILNFWLMDVVFNGF. Over 242–302 the chain is Extracellular; that stretch reads WYKYIHALAA…VLPLNILNEK (61 aa). A helical membrane pass occupies residues 303–323; the sequence is IFAVLYVWFLFIALLAIMNIL. Residues 324-481 lie on the Cytoplasmic side of the membrane; the sequence is YRLLVICCPE…MDRFFHESHA (158 aa).

This sequence belongs to the pannexin family. Uniform expression in the imaginal wing disk. Expressed in an outer layer of the pupal developing CNS. Also expressed in pupal retina: cone cells and primary pigment cells.

The protein localises to the cell membrane. It is found in the cell junction. The protein resides in the gap junction. Structural components of the gap junctions. The polypeptide is Innexin inx6 (Inx6) (Drosophila melanogaster (Fruit fly)).